The following is a 160-amino-acid chain: Small ribosomal subunit protein uS10m (160 aa).

This sequence belongs to the universal ribosomal protein uS10 family. In terms of assembly, component of the mitochondrial ribosome small subunit (28S) which comprises a 12S rRNA and about 30 distinct proteins.

Its subcellular location is the mitochondrion. This chain is Small ribosomal subunit protein uS10m (Mrps10), found in Mus musculus (Mouse).